A 342-amino-acid chain; its full sequence is Nucleoid-associated protein SO_2177 (342 aa).

This sequence belongs to the YejK family.

The protein localises to the cytoplasm. Its subcellular location is the nucleoid. This chain is Nucleoid-associated protein SO_2177, found in Shewanella oneidensis (strain ATCC 700550 / JCM 31522 / CIP 106686 / LMG 19005 / NCIMB 14063 / MR-1).